The sequence spans 250 residues: MATQISKKRKFVADGVFYAELNEVLTRELAEDGYSGVEVRVTPMRTEIIIRATRTQNVLGEKGRRIRELTSLVQKRFKFPVDSVELYAEKVNNRGLCAIAQAESLRYKLLGGLAVRRACYGVLRFVMESGAKGCEVIVSGKLRAARAKSMKFKDGYMVSSGQPTKEYIDAAVRHVLLRQGVLGIKVKIMLDWDPTGKSGPKTPLPDVVIIHAPKDDVVYSAPAQAAAPVTLVQEAPLTTVDYPEMIPPVA.

The 72-residue stretch at 21–92 folds into the KH type-2 domain; it reads LNEVLTRELA…SVELYAEKVN (72 aa).

Belongs to the universal ribosomal protein uS3 family. As to quaternary structure, interacts with SNRNP35.

This is Small ribosomal subunit protein uS3z (RPS3A) from Arabidopsis thaliana (Mouse-ear cress).